The following is a 357-amino-acid chain: Nicotinate-nucleotide--dimethylbenzimidazole phosphoribosyltransferase (357 aa).

Catalysis depends on Glu323, which acts as the Proton acceptor.

Belongs to the CobT family.

The enzyme catalyses 5,6-dimethylbenzimidazole + nicotinate beta-D-ribonucleotide = alpha-ribazole 5'-phosphate + nicotinate + H(+). Its pathway is nucleoside biosynthesis; alpha-ribazole biosynthesis; alpha-ribazole from 5,6-dimethylbenzimidazole: step 1/2. Its function is as follows. Catalyzes the synthesis of alpha-ribazole-5'-phosphate from nicotinate mononucleotide (NAMN) and 5,6-dimethylbenzimidazole (DMB). The chain is Nicotinate-nucleotide--dimethylbenzimidazole phosphoribosyltransferase from Nitratidesulfovibrio vulgaris (strain ATCC 29579 / DSM 644 / CCUG 34227 / NCIMB 8303 / VKM B-1760 / Hildenborough) (Desulfovibrio vulgaris).